A 464-amino-acid chain; its full sequence is Argininosuccinate lyase (464 aa).

The protein belongs to the lyase 1 family. Argininosuccinate lyase subfamily.

It localises to the cytoplasm. The catalysed reaction is 2-(N(omega)-L-arginino)succinate = fumarate + L-arginine. It functions in the pathway amino-acid biosynthesis; L-arginine biosynthesis; L-arginine from L-ornithine and carbamoyl phosphate: step 3/3. The protein is Argininosuccinate lyase of Moorella thermoacetica (strain ATCC 39073 / JCM 9320).